The sequence spans 339 residues: D-erythrose-4-phosphate dehydrogenase (339 aa).

NAD(+) is bound at residue 11-12 (RI). Substrate-binding positions include 153–155 (SCT), Arg-199, 212–213 (TK), and Arg-235. Cys-154 serves as the catalytic Nucleophile. Residue Asn-317 coordinates NAD(+).

The protein belongs to the glyceraldehyde-3-phosphate dehydrogenase family. Epd subfamily. Homotetramer.

It localises to the cytoplasm. The catalysed reaction is D-erythrose 4-phosphate + NAD(+) + H2O = 4-phospho-D-erythronate + NADH + 2 H(+). Its pathway is cofactor biosynthesis; pyridoxine 5'-phosphate biosynthesis; pyridoxine 5'-phosphate from D-erythrose 4-phosphate: step 1/5. In terms of biological role, catalyzes the NAD-dependent conversion of D-erythrose 4-phosphate to 4-phosphoerythronate. This chain is D-erythrose-4-phosphate dehydrogenase, found in Shewanella halifaxensis (strain HAW-EB4).